Reading from the N-terminus, the 204-residue chain is Small ribosomal subunit protein uS4 (204 aa).

The S4 RNA-binding domain maps to 95–157; it reads RRLDNTVFRM…KGIHSIIRHN (63 aa).

Belongs to the universal ribosomal protein uS4 family. As to quaternary structure, part of the 30S ribosomal subunit. Contacts protein S5. The interaction surface between S4 and S5 is involved in control of translational fidelity.

Functionally, one of the primary rRNA binding proteins, it binds directly to 16S rRNA where it nucleates assembly of the body of the 30S subunit. In terms of biological role, with S5 and S12 plays an important role in translational accuracy. In Treponema pallidum (strain Nichols), this protein is Small ribosomal subunit protein uS4.